The chain runs to 170 residues: Crossover junction endodeoxyribonuclease RuvC (170 aa).

Catalysis depends on residues aspartate 11, glutamate 71, and aspartate 143. Positions 11, 71, and 143 each coordinate Mg(2+).

The protein belongs to the RuvC family. In terms of assembly, homodimer which binds Holliday junction (HJ) DNA. The HJ becomes 2-fold symmetrical on binding to RuvC with unstacked arms; it has a different conformation from HJ DNA in complex with RuvA. In the full resolvosome a probable DNA-RuvA(4)-RuvB(12)-RuvC(2) complex forms which resolves the HJ. Requires Mg(2+) as cofactor.

The protein localises to the cytoplasm. The enzyme catalyses Endonucleolytic cleavage at a junction such as a reciprocal single-stranded crossover between two homologous DNA duplexes (Holliday junction).. The RuvA-RuvB-RuvC complex processes Holliday junction (HJ) DNA during genetic recombination and DNA repair. Endonuclease that resolves HJ intermediates. Cleaves cruciform DNA by making single-stranded nicks across the HJ at symmetrical positions within the homologous arms, yielding a 5'-phosphate and a 3'-hydroxyl group; requires a central core of homology in the junction. The consensus cleavage sequence is 5'-(A/T)TT(C/G)-3'. Cleavage occurs on the 3'-side of the TT dinucleotide at the point of strand exchange. HJ branch migration catalyzed by RuvA-RuvB allows RuvC to scan DNA until it finds its consensus sequence, where it cleaves and resolves the cruciform DNA. This chain is Crossover junction endodeoxyribonuclease RuvC, found in Rhizobium rhizogenes (strain K84 / ATCC BAA-868) (Agrobacterium radiobacter).